The chain runs to 316 residues: Methionyl-tRNA formyltransferase (316 aa).

Serine 112–proline 115 contacts (6S)-5,6,7,8-tetrahydrofolate.

This sequence belongs to the Fmt family.

It carries out the reaction L-methionyl-tRNA(fMet) + (6R)-10-formyltetrahydrofolate = N-formyl-L-methionyl-tRNA(fMet) + (6S)-5,6,7,8-tetrahydrofolate + H(+). Attaches a formyl group to the free amino group of methionyl-tRNA(fMet). The formyl group appears to play a dual role in the initiator identity of N-formylmethionyl-tRNA by promoting its recognition by IF2 and preventing the misappropriation of this tRNA by the elongation apparatus. This Haemophilus ducreyi (strain 35000HP / ATCC 700724) protein is Methionyl-tRNA formyltransferase.